The primary structure comprises 158 residues: Transcriptional regulator MraZ (158 aa).

2 SpoVT-AbrB domains span residues 5-50 and 91-134; these read IYET…GGVY and AVEC…SQSE.

Belongs to the MraZ family. In terms of assembly, forms oligomers.

The protein resides in the cytoplasm. Its subcellular location is the nucleoid. This Geobacter metallireducens (strain ATCC 53774 / DSM 7210 / GS-15) protein is Transcriptional regulator MraZ.